Here is a 353-residue protein sequence, read N- to C-terminus: S-adenosylmethionine:tRNA ribosyltransferase-isomerase (353 aa).

The protein belongs to the QueA family. As to quaternary structure, monomer.

It localises to the cytoplasm. It catalyses the reaction 7-aminomethyl-7-carbaguanosine(34) in tRNA + S-adenosyl-L-methionine = epoxyqueuosine(34) in tRNA + adenine + L-methionine + 2 H(+). It functions in the pathway tRNA modification; tRNA-queuosine biosynthesis. In terms of biological role, transfers and isomerizes the ribose moiety from AdoMet to the 7-aminomethyl group of 7-deazaguanine (preQ1-tRNA) to give epoxyqueuosine (oQ-tRNA). This chain is S-adenosylmethionine:tRNA ribosyltransferase-isomerase, found in Nitrosomonas europaea (strain ATCC 19718 / CIP 103999 / KCTC 2705 / NBRC 14298).